A 224-amino-acid polypeptide reads, in one-letter code: MPGGLLLGDEAPNFEANTTIGRIRFHDYLGDSWGILFSHPRDFTPVCTTELGRAAKLAPEFAKRNVKMIALSIDSVEDHLAWSKDINAYNGEEPTEKLPFPIIDDKNRDLAIQLGMLDPAEKDEKGMPVTARVVFIFGPDKKLKLSILYPATTGRNFDEILRVIISLQLTAEKRVATPVDWKNGDSVMVLPTIPEEEAKKLFPKGVFTKELPSGKKYLRYTPQP.

A Thioredoxin domain is found at 5 to 169 (LLLGDEAPNF…ILRVIISLQL (165 aa)). The required and sufficient for targeting to lysosomes and lamellar bodies stretch occupies residues 31 to 40 (DSWGILFSHP). At Thr-44 the chain carries Phosphothreonine. Cys-47 serves as the catalytic Cysteine sulfenic acid (-SOH) intermediate; for peroxidase activity. Lys-63 bears the N6-acetyllysine mark. The residue at position 89 (Tyr-89) is a Phosphotyrosine. The For phospholipase activity role is filled by Asp-140. Position 177 is a phosphothreonine; by MAPK (Thr-177). N6-acetyllysine; alternate is present on Lys-209. An N6-succinyllysine; alternate modification is found at Lys-209.

It belongs to the peroxiredoxin family. Prx6 subfamily. In terms of assembly, homodimer. Interacts with GSTP1; mediates PRDX6 glutathionylation and regeneration. Interacts with APEX1. Interacts with STH. May interact with FAM168B. May interact with HTR2A. Requires Does not need Ca(2+) as cofactor. as cofactor. Post-translationally, irreversibly inactivated by overoxidation of Cys-47 to sulfinic acid (Cys-SO(2)H) and sulfonic acid (Cys-SO(3)H) forms upon oxidative stress. Phosphorylation at Thr-177 by MAP kinases increases the phospholipase activity of the enzyme. The phosphorylated form exhibits a greater lysophosphatidylcholine acyltransferase activity compared to the non-phosphorylated form.

It is found in the cytoplasm. The protein localises to the lysosome. It carries out the reaction a hydroperoxide + 2 glutathione = an alcohol + glutathione disulfide + H2O. The catalysed reaction is a 1,2-diacyl-sn-glycero-3-phosphocholine + H2O = a 1-acyl-sn-glycero-3-phosphocholine + a fatty acid + H(+). It catalyses the reaction a 1-acyl-sn-glycero-3-phosphocholine + an acyl-CoA = a 1,2-diacyl-sn-glycero-3-phosphocholine + CoA. The enzyme catalyses 1-hexadecanoyl-sn-glycero-3-phosphocholine + hexadecanoyl-CoA = 1,2-dihexadecanoyl-sn-glycero-3-phosphocholine + CoA. It carries out the reaction 1,2-dihexadecanoyl-sn-glycero-3-phosphocholine + H2O = 1-hexadecanoyl-sn-glycero-3-phosphocholine + hexadecanoate + H(+). Thiol-specific peroxidase that catalyzes the reduction of hydrogen peroxide and organic hydroperoxides to water and alcohols, respectively. Can reduce H(2)O(2) and short chain organic, fatty acid, and phospholipid hydroperoxides. Also has phospholipase activity, and can therefore either reduce the oxidized sn-2 fatty acyl group of phospholipids (peroxidase activity) or hydrolyze the sn-2 ester bond of phospholipids (phospholipase activity). These activities are dependent on binding to phospholipids at acidic pH and to oxidized phospholipds at cytosolic pH. Plays a role in cell protection against oxidative stress by detoxifying peroxides and in phospholipid homeostasis. Exhibits acyl-CoA-dependent lysophospholipid acyltransferase which mediates the conversion of lysophosphatidylcholine (1-acyl-sn-glycero-3-phosphocholine or LPC) into phosphatidylcholine (1,2-diacyl-sn-glycero-3-phosphocholine or PC). Shows a clear preference for LPC as the lysophospholipid and for palmitoyl CoA as the fatty acyl substrate. The protein is Peroxiredoxin-6 (PRDX6) of Bos taurus (Bovine).